We begin with the raw amino-acid sequence, 193 residues long: Ion-translocating oxidoreductase complex subunit A (193 aa).

A run of 6 helical transmembrane segments spans residues 5 to 25 (ALLL…FLGL), 39 to 59 (LGMG…SWML), 62 to 82 (WLLA…LVIA), 102 to 122 (SLGI…VALL), 134 to 154 (VLFG…FAGL), and 172 to 192 (AAFI…GLVA).

Belongs to the NqrDE/RnfAE family. In terms of assembly, the complex is composed of six subunits: RnfA, RnfB, RnfC, RnfD, RnfE and RnfG.

It is found in the cell inner membrane. Part of a membrane-bound complex that couples electron transfer with translocation of ions across the membrane. This is Ion-translocating oxidoreductase complex subunit A from Aromatoleum aromaticum (strain DSM 19018 / LMG 30748 / EbN1) (Azoarcus sp. (strain EbN1)).